A 644-amino-acid polypeptide reads, in one-letter code: MQVADSEGWSIQDSAALYGLDRWGEPYFTINGRGHISVQPQGERGGSLDLVELVSELRGRNLGLPLLIRFDDILEDRLERLHAAFERAIAQYSYTGRYQGVFPVKCNQQRHVVEELVICGKRWNFGLEAGSKAELLIALSLLDDPEALLICNGYKDRLYIETAILARRLGRQPVVVIEQPDEVDRIIEASKSLGAAPYIGVRAKLSSRSTGRWGSSVGDKAKFGLSIPELLATVERLRESNLLPDLRLLHFHIGSQINDIAVLKDALQEAGQIYVELTRLGAPMGFLDVGGGLGIDYDGSRTASAASTNYSLQNYANDVVATVRECCEPNAVAVPTLVSESGRAIASHFSLLVFDVLGSSALSASIPNASGDEPLTVRNLRDTLVTIQELSGTADAQLVRLQEAWNDALKFKQDALAAFRLGYMGLPDRASAEQLTWACADAIAQRLPKEQAIPEELAALSKALAGTYYANLSIFRSAPDTWAIDQLFPVVPIQKLNQRPTRLANLADLTCDSDGRLDRFIGDGQPKQLLELHELDDNNPYLIGLFLSGAYQEVMGNLHNLFGTTNAVHIRLSPGGSYRIDHVVRGDTNADVLEAMEHDPRVLLERLRVAAEAAINDGQLRIDESRRLLDHLESSLRQTTYLQD.

The residue at position 105 (Lys105) is an N6-(pyridoxal phosphate)lysine. Leu287–Tyr297 is a substrate binding site.

Belongs to the Orn/Lys/Arg decarboxylase class-II family. SpeA subfamily. Mg(2+) serves as cofactor. Requires pyridoxal 5'-phosphate as cofactor.

The enzyme catalyses L-arginine + H(+) = agmatine + CO2. Catalyzes the biosynthesis of agmatine from arginine. The chain is Biosynthetic arginine decarboxylase from Parasynechococcus marenigrum (strain WH8102).